Reading from the N-terminus, the 716-residue chain is Epidermal growth factor receptor kinase substrate 8-like protein 1 (716 aa).

One can recognise a PTB domain in the interval 35–164 (QYHVNHLVTF…LQNYRSGRGE (130 aa)). Disordered stretches follow at residues 175 to 194 (EELR…QRRP), 203 to 249 (VEPS…GPEL), 404 to 472 (PGVE…ETES), 528 to 582 (YNIL…SLDP), and 600 to 628 (SRLA…PRSE). At serine 182 the chain carries Phosphoserine. A Phosphothreonine modification is found at threonine 187. The span at 435-446 (PWEDPVEKQLQH) shows a compositional bias: basic and acidic residues. Residues 453–464 (QSAPQVAVNGQQ) show a composition bias toward polar residues. An SH3 domain is found at 477–536 (KARKWVLCNYDFQARNGSELSVKHRDVLEVLDDRRKWWKVRDHQGQEGYVPYNILTPHPG). The span at 553–563 (TPPPPPAPAPA) shows a compositional bias: pro residues. A coiled-coil region spans residues 682-713 (VQRALLEDREKVSELEAVMEKQKKKVEGETKT).

Belongs to the EPS8 family. Interacts with ABI1. Part of a complex that contains SOS1, ABI1 and EPS8L2. Associates with F-actin. As to expression, detected in placenta, skin, mammary gland, bone marrow and stomach.

The protein resides in the cytoplasm. Functionally, stimulates guanine exchange activity of SOS1. May play a role in membrane ruffling and remodeling of the actin cytoskeleton. The sequence is that of Epidermal growth factor receptor kinase substrate 8-like protein 1 (Eps8l1) from Mus musculus (Mouse).